A 99-amino-acid chain; its full sequence is U11-barytoxin-Tl1a (99 aa).

The signal sequence occupies residues 1–21 (MKTLVLVAVLGLASLYLLSYA). The propeptide occupies 22 to 50 (SEVQQISRDEEDFRALMASFGGIFDTEER). Disulfide bonds link Cys57/Cys71, Cys64/Cys76, and Cys70/Cys90.

This sequence belongs to the neurotoxin 10 (Hwtx-1) family. 25 (ICK4) subfamily. Expressed by the venom gland.

The protein resides in the secreted. In terms of biological role, ion channel inhibitor. This is U11-barytoxin-Tl1a from Trittame loki (Brush-footed trapdoor spider).